The chain runs to 62 residues: Photosystem II reaction center protein Z (62 aa).

2 helical membrane-spanning segments follow: residues 8–28 (ALFALIATSSILLISVPIVFA) and 41–61 (FSGTSLWIGLVFLVAILNSLI).

It belongs to the PsbZ family. PSII is composed of 1 copy each of membrane proteins PsbA, PsbB, PsbC, PsbD, PsbE, PsbF, PsbH, PsbI, PsbJ, PsbK, PsbL, PsbM, PsbT, PsbY, PsbZ, Psb30/Ycf12, at least 3 peripheral proteins of the oxygen-evolving complex and a large number of cofactors. It forms dimeric complexes.

The protein localises to the plastid. It is found in the chloroplast thylakoid membrane. May control the interaction of photosystem II (PSII) cores with the light-harvesting antenna, regulates electron flow through the 2 photosystem reaction centers. PSII is a light-driven water plastoquinone oxidoreductase, using light energy to abstract electrons from H(2)O, generating a proton gradient subsequently used for ATP formation. The protein is Photosystem II reaction center protein Z of Drimys granadensis.